The primary structure comprises 189 residues: MATDIFNSKNLAVQAQKKILGKMASSKYIATSLIDDTSGEVLDELYQVTREYTQNKKDAEKITKNLIKTVIKLAVLYRNNQFNEEEIGLMEKFKRKVHQLAMTVVSFYQVEYTFDRNVLSKLLNECRELLHQVIQRHLTAKSHGRVNNVFDHFSNCEFLAALYNPFGPYKKHLQRLCNGVNKMLDEDNI.

The protein belongs to the TNFAIP8 family.

The protein localises to the cytoplasm. In terms of biological role, acts as a negative mediator of apoptosis. The chain is Tumor necrosis factor alpha-induced protein 8 (tnfaip8) from Xenopus laevis (African clawed frog).